The following is a 264-amino-acid chain: uncharacterized protein (264 aa).

4 helical membrane-spanning segments follow: residues 43-63 (VVAA…LYLI), 68-88 (FLPS…LLGI), 96-116 (ILPA…LGCI), and 150-170 (LAAK…VLAV). The tract at residues 216–247 (SYEDALKNSSQQPSTSSSSSSPPSRPPHSVYT) is disordered. Residues 224 to 237 (SSQQPSTSSSSSSP) show a composition bias toward low complexity.

It localises to the membrane. This is an uncharacterized protein from Caenorhabditis elegans.